A 96-amino-acid chain; its full sequence is RNA-binding protein Hfq (96 aa).

The Sm domain maps to 9–68; that stretch reads DPYLNALRRERIPVSIYLVNGIKLQGQIESFDQFVILLKNTVNQMVYKHAISTVVPARSV. A disordered region spans residues 65–96; the sequence is ARSVSHHNNPQQQQQHSQQTESAAPAAEPQAE. The segment covering 70 to 96 has biased composition (low complexity); it reads HHNNPQQQQQHSQQTESAAPAAEPQAE.

This sequence belongs to the Hfq family. Homohexamer.

In terms of biological role, RNA chaperone that binds small regulatory RNA (sRNAs) and mRNAs to facilitate mRNA translational regulation in response to envelope stress, environmental stress and changes in metabolite concentrations. Also binds with high specificity to tRNAs. The polypeptide is RNA-binding protein Hfq (Mannheimia succiniciproducens (strain KCTC 0769BP / MBEL55E)).